Here is a 202-residue protein sequence, read N- to C-terminus: Protein-methionine-sulfoxide reductase heme-binding subunit MsrQ (202 aa).

Transmembrane regions (helical) follow at residues 8 to 28 (LAVF…AWIF), 42 to 62 (LGLG…LQKL), 75 to 95 (LGLW…VFIL), 110 to 130 (PYII…ITSN), 147 to 167 (LVYL…RADL), and 169 to 189 (EWTL…PSIA).

This sequence belongs to the MsrQ family. Heterodimer of a catalytic subunit (MsrP) and a heme-binding subunit (MsrQ). FMN serves as cofactor. The cofactor is heme b.

It localises to the cell inner membrane. Its function is as follows. Part of the MsrPQ system that repairs oxidized periplasmic proteins containing methionine sulfoxide residues (Met-O), using respiratory chain electrons. Thus protects these proteins from oxidative-stress damage caused by reactive species of oxygen and chlorine generated by the host defense mechanisms. MsrPQ is essential for the maintenance of envelope integrity under bleach stress, rescuing a wide series of structurally unrelated periplasmic proteins from methionine oxidation. MsrQ provides electrons for reduction to the reductase catalytic subunit MsrP, using the quinone pool of the respiratory chain. This is Protein-methionine-sulfoxide reductase heme-binding subunit MsrQ from Pseudomonas aeruginosa (strain ATCC 15692 / DSM 22644 / CIP 104116 / JCM 14847 / LMG 12228 / 1C / PRS 101 / PAO1).